The chain runs to 139 residues: D-ribose pyranase (139 aa).

His-20 acts as the Proton donor in catalysis. Substrate contacts are provided by residues Asp-28, His-106, and 128 to 130; that span reads YAN.

The protein belongs to the RbsD / FucU family. RbsD subfamily. As to quaternary structure, homodecamer.

It localises to the cytoplasm. The catalysed reaction is beta-D-ribopyranose = beta-D-ribofuranose. Its pathway is carbohydrate metabolism; D-ribose degradation; D-ribose 5-phosphate from beta-D-ribopyranose: step 1/2. Functionally, catalyzes the interconversion of beta-pyran and beta-furan forms of D-ribose. This Shewanella pealeana (strain ATCC 700345 / ANG-SQ1) protein is D-ribose pyranase.